The sequence spans 666 residues: DNA mismatch repair protein MutL (666 aa).

It belongs to the DNA mismatch repair MutL/HexB family.

Functionally, this protein is involved in the repair of mismatches in DNA. It is required for dam-dependent methyl-directed DNA mismatch repair. May act as a 'molecular matchmaker', a protein that promotes the formation of a stable complex between two or more DNA-binding proteins in an ATP-dependent manner without itself being part of a final effector complex. This chain is DNA mismatch repair protein MutL, found in Clostridium botulinum (strain ATCC 19397 / Type A).